A 301-amino-acid chain; its full sequence is UDP-N-acetylenolpyruvoylglucosamine reductase 1 (301 aa).

The FAD-binding PCMH-type domain occupies 29–196 (KIGGPADILI…LEAVFQLQAG (168 aa)). Residue Arg174 is part of the active site. Ser225 acts as the Proton donor in catalysis. Glu295 is a catalytic residue.

This sequence belongs to the MurB family. FAD serves as cofactor.

It localises to the cytoplasm. The catalysed reaction is UDP-N-acetyl-alpha-D-muramate + NADP(+) = UDP-N-acetyl-3-O-(1-carboxyvinyl)-alpha-D-glucosamine + NADPH + H(+). It functions in the pathway cell wall biogenesis; peptidoglycan biosynthesis. Functionally, cell wall formation. In Bacillus cereus (strain ATCC 14579 / DSM 31 / CCUG 7414 / JCM 2152 / NBRC 15305 / NCIMB 9373 / NCTC 2599 / NRRL B-3711), this protein is UDP-N-acetylenolpyruvoylglucosamine reductase 1 (murB1).